Here is a 222-residue protein sequence, read N- to C-terminus: uncharacterized protein (222 aa).

The segment at residues 1–27 is a signal peptide (tat-type signal); the sequence is MSFTRRKFVLGMGTVIFFTGSASSLLA. 4Fe-4S ferredoxin-type domains are found at residues 37–67, 83–114, and 115–144; these read YAMI…AQGS, TQYH…RDEQ, and GIVR…LNPV. [4Fe-4S] cluster contacts are provided by C46, C49, C52, C56, C92, C95, C100, C104, C124, C127, C130, C134, C151, C154, C167, and C171.

Post-translationally, exported by the Tat system. The position of the signal peptide cleavage has not been experimentally proven. Can also be exported by the Sec system.

This is an uncharacterized protein from Escherichia coli (strain K12).